Consider the following 3071-residue polypeptide: Intermembrane lipid transfer protein vps1301 (3071 aa).

The 114-residue stretch at 2–115 (LEGLVAGLLN…QQALKQEQLD (114 aa)) folds into the Chorein N-terminal domain. The SHR-BD domain maps to 2143–2415 (HIEIFSPYII…KYSWDYPCCA (273 aa)).

It belongs to the VPS13 family.

It is found in the golgi apparatus. The protein localises to the trans-Golgi network. In terms of biological role, mediates the transfer of lipids between membranes at organelle contact sites. May play a role in mitochondrial lipid homeostasis, Golgi vesicle transport, reticulophagy, actin cytoskeleton organization and formation of the forespore membrane. In Schizosaccharomyces pombe (strain 972 / ATCC 24843) (Fission yeast), this protein is Intermembrane lipid transfer protein vps1301.